A 1059-amino-acid chain; its full sequence is DNA (cytosine-5)-methyltransferase CMT1 (1059 aa).

Disordered regions lie at residues 1-196 (MVPE…GALA) and 230-272 (CVGE…DEAR). Residues 29–41 (AEAEAVADLDEID) show a composition bias toward acidic residues. Composition is skewed to basic and acidic residues over residues 42–79 (REMS…EKAA), 92–129 (REMP…EKAA), and 147–157 (SRGKRQRGVEK). The span at 158 to 167 (VKRRTRKKTA) shows a compositional bias: basic residues. Basic and acidic residues predominate over residues 252–262 (RRVEDSDDHFV). In terms of domain architecture, BAH spans 312–436 (EIYHLDDDVY…VAYSTFANLP (125 aa)). The SAM-dependent MTase C5-type domain occupies 479-1017 (ASLLDLYSGC…YALGLAYRGE (539 aa)). A Chromo domain is found at 584-649 (FDVEELLEIC…KGHKENILPL (66 aa)). Residue C662 is part of the active site.

Belongs to the class I-like SAM-binding methyltransferase superfamily. C5-methyltransferase family.

It localises to the nucleus. The catalysed reaction is a 2'-deoxycytidine in DNA + S-adenosyl-L-methionine = a 5-methyl-2'-deoxycytidine in DNA + S-adenosyl-L-homocysteine + H(+). In terms of biological role, involved in CpXpG DNA methylation. May not play a major role in maintaining CpXpG methylation. The protein is DNA (cytosine-5)-methyltransferase CMT1 of Oryza sativa subsp. japonica (Rice).